Consider the following 466-residue polypeptide: Delta-1 crystallin (466 aa).

It belongs to the lyase 1 family. Argininosuccinate lyase subfamily. In terms of assembly, homotetramer. In terms of tissue distribution, eye lens.

Functionally, delta crystallin, the principal crystallin in embryonic lens, is found only in birds and reptiles. Despite possessing the necessary catalytic residues, this protein does not function as an enzymatically active argininosuccinate lyase. This Anas platyrhynchos (Mallard) protein is Delta-1 crystallin (ASL1).